We begin with the raw amino-acid sequence, 238 residues long: Thrombin-like enzyme AhV_TL-I (238 aa).

Residues 1–229 (IIGGDECNIN…HLDWIENIIA (229 aa)) form the Peptidase S1 domain. 6 cysteine pairs are disulfide-bonded: C7–C141, C28–C44, C76–C236, C120–C190, C152–C169, and C180–C205. The active-site Charge relay system is the H43. N81 carries N-linked (GlcNAc...) asparagine glycosylation. D88 (charge relay system) is an active-site residue. The active-site Charge relay system is S184.

It belongs to the peptidase S1 family. Snake venom subfamily. Monomer. In terms of processing, N-glycosylated at Asn-81 by a disaccharide composed of two N-acetylglucosamine (NAG). The presence of this N-glycan deforms the enzyme and Removing the carbohydrate moiety increases the esterase activity, but induces a complete loss of contractile response on mouse thoracic aorta. As to expression, expressed by the venom gland.

It localises to the secreted. With respect to regulation, inhibited by PMSF, L-cysteine and partially by SBTI and leupeptin. Functionally, thrombin-like enzyme that shows fibrinogenolytic activity against both the Aalpha (FGA) and Bbeta (FGB) chains of bovine fibrinogen. This enzyme has poor esterolytic activity upon BAEE substrate. It induces mouse thoracic aortic ring contraction with EC(50)=147 nmol/L. It shows vasoconstrictor effects that are independent of the enzymatic activity, but related to the release of calcium ions form the calcium store, potentially through the activation of ryanodine receptors. This chain is Thrombin-like enzyme AhV_TL-I, found in Gloydius halys (Chinese water mocassin).